The sequence spans 88 residues: HssA/B-like protein 13 (88 aa).

It belongs to the hssA/B family.

The protein is HssA/B-like protein 13 (hssl13) of Dictyostelium discoideum (Social amoeba).